We begin with the raw amino-acid sequence, 96 residues long: Large ribosomal subunit protein bL27 (96 aa).

A propeptide spanning residues 1-9 (MLNMNLQLL) is cleaved from the precursor.

The protein belongs to the bacterial ribosomal protein bL27 family. Post-translationally, the N-terminus is cleaved by ribosomal processing cysteine protease Prp.

The chain is Large ribosomal subunit protein bL27 from Clostridioides difficile (strain 630) (Peptoclostridium difficile).